The primary structure comprises 153 residues: NADPH-dependent 7-cyano-7-deazaguanine reductase (153 aa).

A disordered region spans residues 1–30 (MDSIETHAKQLGQQTPLPASPEAAQLDRVP). Cysteine 51 acts as the Thioimide intermediate in catalysis. The active-site Proton donor is the aspartate 58. Substrate contacts are provided by residues 73 to 75 (VES) and 92 to 93 (HE).

This sequence belongs to the GTP cyclohydrolase I family. QueF type 1 subfamily.

It is found in the cytoplasm. The catalysed reaction is 7-aminomethyl-7-carbaguanine + 2 NADP(+) = 7-cyano-7-deazaguanine + 2 NADPH + 3 H(+). It participates in tRNA modification; tRNA-queuosine biosynthesis. In terms of biological role, catalyzes the NADPH-dependent reduction of 7-cyano-7-deazaguanine (preQ0) to 7-aminomethyl-7-deazaguanine (preQ1). This Methylorubrum extorquens (strain CM4 / NCIMB 13688) (Methylobacterium extorquens) protein is NADPH-dependent 7-cyano-7-deazaguanine reductase.